The chain runs to 270 residues: Meiotic recombination 1 protein (270 aa).

The region spanning 191 to 225 (EIKLNKTQITFLIGAKGTRIESLREKSGASIKIIP) is the KH domain.

In terms of biological role, required for chromosome pairing and genetic recombination. MER1 may function to bring the axial elements of the synaptonemal complex corresponding to homologous chromosomes together by initiating recombination. MER1 might be responsible for regulating the MER2 gene and/or gene product. The sequence is that of Meiotic recombination 1 protein (MER1) from Saccharomyces cerevisiae (strain ATCC 204508 / S288c) (Baker's yeast).